A 326-amino-acid polypeptide reads, in one-letter code: Putative GTPase CC_2483 (326 aa).

Residues 61 to 69 (GVPGAGKST), D203, and 238 to 240 (SGL) contribute to the GTP site.

This sequence belongs to the SIMIBI class G3E GTPase family. ArgK/MeaB subfamily.

May have GTPase activity. May also bind and hydrolyze ATP. May function as chaperone. The protein is Putative GTPase CC_2483 of Caulobacter vibrioides (strain ATCC 19089 / CIP 103742 / CB 15) (Caulobacter crescentus).